Reading from the N-terminus, the 139-residue chain is Large-conductance mechanosensitive channel (139 aa).

2 helical membrane passes run 14–34 and 86–106; these read VVDMAVGIIIGAAFGAIVKSL and GLFINAVVSFTIVAFAVFLLI.

Belongs to the MscL family. As to quaternary structure, homopentamer.

The protein resides in the cell inner membrane. In terms of biological role, channel that opens in response to stretch forces in the membrane lipid bilayer. May participate in the regulation of osmotic pressure changes within the cell. The chain is Large-conductance mechanosensitive channel from Methylobacillus flagellatus (strain ATCC 51484 / DSM 6875 / VKM B-1610 / KT).